We begin with the raw amino-acid sequence, 279 residues long: MAFQGTSRTLTQQSSAATSDDLQKILFSPEAIKKMATECDLGRHHWMRADNAISVRPLVPEVTHGRIASFFKSGYDVGELCSKGYMSVPQVLCAVTRTVSTDAEGSLRIYLADLGDKELSPIDGQCVSLHNHDLPALVSFQPTYDCPMETVGNRKRCFAVVIERHGYIGYTGTTASVCSNWQARFSSKNNNYTHIAAGKTLVLPFNRLAEQTKPSAVARLLKSQLNNIESSQYVLTNAKINQNARSESEELNVESPPAAIGSSSASRSEAFRPQVVNGL.

The disordered stretch occupies residues 246 to 279 (SESEELNVESPPAAIGSSSASRSEAFRPQVVNGL). Positions 254–268 (ESPPAAIGSSSASRS) are enriched in low complexity.

This sequence belongs to the cucumovirus movement protein family.

It is found in the host cell junction. The protein resides in the host plasmodesma. Functionally, transports viral genome to neighboring plant cells directly through plasmosdesmata, without any budding. The movement protein allows efficient cell to cell propagation, by bypassing the host cell wall barrier. Acts by forming a tubular structure at the host plasmodesmata, enlarging it enough to allow free passage of virion capsids. The polypeptide is Movement protein (Cucumber mosaic virus (strain N) (CMV)).